The chain runs to 323 residues: Lipid A biosynthesis acyltransferase 1 (323 aa).

A helical transmembrane segment spans residues 23–43; that stretch reads YWGAWLGVAAMAGIALTPPKF. The HXXXXD motif motif lies at 139–144; it reads HGWAVD.

The protein belongs to the LpxL/LpxM/LpxP family. LpxM subfamily.

Its subcellular location is the cell inner membrane. It carries out the reaction an alpha-Kdo-(2-&gt;4)-alpha-Kdo-(2-&gt;6)-(acyl)-lipid IVA + a fatty acyl-[ACP] = an alpha-Kdo-(2-&gt;4)-alpha-Kdo-(2-&gt;6)-lipid A + holo-[ACP]. It functions in the pathway glycolipid biosynthesis; KDO(2)-lipid A biosynthesis; KDO(2)-lipid A from CMP-3-deoxy-D-manno-octulosonate and lipid IV(A): step 4/4. Its pathway is bacterial outer membrane biogenesis; lipopolysaccharide biosynthesis. Its function is as follows. Catalyzes the transfer of an acyl chain from an acyl-[acyl-carrier-protein] (ACP) to a Kdo(2)-(acyl)-lipid IV(A) to form a Kdo(2)-lipid A. This is Lipid A biosynthesis acyltransferase 1 from Shigella flexneri.